A 710-amino-acid chain; its full sequence is Ent-copalyl diphosphate synthase 1 (710 aa).

Lysine 145 contacts substrate. Mg(2+) contacts are provided by aspartate 277 and aspartate 279. Residues aspartate 277–aspartate 280 carry the DXDD motif motif. Lysine 364 serves as a coordination point for substrate.

It belongs to the terpene synthase family. Tpsc subfamily. Requires Mg(2+) as cofactor. In terms of tissue distribution, expressed in germinating seeds and leaves.

The enzyme catalyses (2E,6E,10E)-geranylgeranyl diphosphate = ent-copalyl diphosphate. It participates in plant hormone biosynthesis; gibberellin biosynthesis. The protein operates within secondary metabolite biosynthesis; terpenoid biosynthesis. Functionally, involved in the biosynthesis of ent-kaurene diterpenoids natural products such as oridonin, miltiradiene, eriocalyxin B and nezukol, known to exhibit antitumor, anti-inflammatory and antibacterial activities, and in the production of gibberellins phytohormones. Catalyzes the conversion of (2E,6E,10E)-geranylgeranyl diphosphate (GGPP) to ent-copalyl diphosphate (ent-CPP). In Isodon eriocalyx (Plectranthus eriocalyx), this protein is Ent-copalyl diphosphate synthase 1.